A 910-amino-acid polypeptide reads, in one-letter code: DNA mismatch repair protein MutS (910 aa).

Positions 1–11 are enriched in basic and acidic residues; the sequence is MEAKVEEKEPE. The interval 1–21 is disordered; that stretch reads MEAKVEEKEPEPVENAGPDAP. 658–665 contributes to the ATP binding site; it reads GPNMGGKS.

Belongs to the DNA mismatch repair MutS family.

In terms of biological role, this protein is involved in the repair of mismatches in DNA. It is possible that it carries out the mismatch recognition step. This protein has a weak ATPase activity. The protein is DNA mismatch repair protein MutS of Brucella canis (strain ATCC 23365 / NCTC 10854 / RM-666).